The chain runs to 109 residues: Flagellar hook-basal body complex protein FliE (109 aa).

This sequence belongs to the FliE family.

The protein resides in the bacterial flagellum basal body. This Pseudomonas paraeruginosa (strain DSM 24068 / PA7) (Pseudomonas aeruginosa (strain PA7)) protein is Flagellar hook-basal body complex protein FliE.